The following is a 352-amino-acid chain: DNA polymerase IV (352 aa).

In terms of domain architecture, UmuC spans 6 to 186 (IIHIDMDAFY…LPLGKIPGVG (181 aa)). Residues Asp10 and Asp104 each contribute to the Mg(2+) site. Residue Glu105 is part of the active site.

The protein belongs to the DNA polymerase type-Y family. In terms of assembly, monomer. Mg(2+) is required as a cofactor.

It is found in the cytoplasm. It carries out the reaction DNA(n) + a 2'-deoxyribonucleoside 5'-triphosphate = DNA(n+1) + diphosphate. Poorly processive, error-prone DNA polymerase involved in untargeted mutagenesis. Copies undamaged DNA at stalled replication forks, which arise in vivo from mismatched or misaligned primer ends. These misaligned primers can be extended by PolIV. Exhibits no 3'-5' exonuclease (proofreading) activity. May be involved in translesional synthesis, in conjunction with the beta clamp from PolIII. This is DNA polymerase IV from Neisseria meningitidis serogroup C / serotype 2a (strain ATCC 700532 / DSM 15464 / FAM18).